The chain runs to 1214 residues: Brassinosteroid LRR receptor kinase BRL3 (1214 aa).

Positions 1–29 (MAAVRVVAPAPSVLLLVAAAVVLLHLARA) are cleaved as a signal peptide. A glycan (N-linked (GlcNAc...) asparagine) is linked at Asn-61. The Cys pair 1 signature appears at 69–76 (CAWAGVSC). 22 LRR repeats span residues 103 to 127 (LSAL…GSPR), 131 to 155 (PCAL…FLAS), 156 to 177 (CGGL…YPFP), 178 to 202 (PSLR…SLTG), 204 to 228 (HGIQ…PCTE), 230 to 250 (SVLD…FVAM), 252 to 276 (PANL…EFGG), 277 to 302 (CANL…LVDC), 303 to 325 (RRLE…TFLV), 327 to 351 (LQAL…LSIL), 353 to 375 (KTLV…SFGQ), 377 to 400 (RFLQ…VITN), 401 to 427 (ISSL…ASRC), 429 to 451 (LLEV…LCSS), 452 to 476 (LPSL…LSNC), 478 to 500 (NLES…ILFL), 502 to 525 (KLVD…CFNS), 526 to 549 (TALE…ITRC), 550 to 572 (VNLI…GFGN), 573 to 597 (LQNL…LGSC), 599 to 621 (NLIW…LAAQ), and 650 to 673 (GVLF…HLCS). 4 N-linked (GlcNAc...) asparagine glycosylation sites follow: Asn-145, Asn-163, Asn-197, and Asn-210. 3 N-linked (GlcNAc...) asparagine glycosylation sites follow: Asn-254, Asn-264, and Asn-279. 2 N-linked (GlcNAc...) asparagine glycosylation sites follow: Asn-400 and Asn-413. The N-linked (GlcNAc...) asparagine glycan is linked to Asn-466. N-linked (GlcNAc...) asparagine glycosylation is found at Asn-512 and Asn-524. The N-linked (GlcNAc...) asparagine glycan is linked to Asn-561. Position 678 (Tyr-678) interacts with brassinolide. LRR repeat units follow at residues 689–712 (NGSM…SFGN), 713–736 (MTYL…AFTG), 738–760 (KGIG…GFGC), and 762–786 (HFLA…QLIT). The Cys pair 2 signature appears at 799–806 (CGIPLNPC). A helical transmembrane segment spans residues 829–849 (SVFLAVTLSVLILFSLLIIHY). The 284-residue stretch at 913 to 1196 (FCAETLIGSG…FQVDSGSNFL (284 aa)) folds into the Protein kinase domain. ATP-binding positions include 919–927 (IGSGGFGEV), Lys-941, 987–989 (EYM), 993–996 (SLDF), 1039–1044 (DMKSSN), and Asp-1057. Asp-1039 acts as the Proton acceptor in catalysis.

It belongs to the protein kinase superfamily. Ser/Thr protein kinase family. Highly expressed in roots. Expressed at low levels in shoots.

The protein localises to the cell membrane. It carries out the reaction L-seryl-[protein] + ATP = O-phospho-L-seryl-[protein] + ADP + H(+). It catalyses the reaction L-threonyl-[protein] + ATP = O-phospho-L-threonyl-[protein] + ADP + H(+). Functionally, may be involved in brassenosteroid (BR) perception in roots. The sequence is that of Brassinosteroid LRR receptor kinase BRL3 from Oryza sativa subsp. japonica (Rice).